The primary structure comprises 167 residues: Small ribosomal subunit protein uS5 (167 aa).

The region spanning 11–74 (LQEKLIAVNR…EKARRAMINV (64 aa)) is the S5 DRBM domain.

The protein belongs to the universal ribosomal protein uS5 family. Part of the 30S ribosomal subunit. Contacts proteins S4 and S8.

Its function is as follows. With S4 and S12 plays an important role in translational accuracy. Located at the back of the 30S subunit body where it stabilizes the conformation of the head with respect to the body. This Yersinia enterocolitica serotype O:8 / biotype 1B (strain NCTC 13174 / 8081) protein is Small ribosomal subunit protein uS5.